A 399-amino-acid polypeptide reads, in one-letter code: Subtilisin-like protease 1 (399 aa).

Positions 1–19 (MGVFRFISISLAAVSAANA) are cleaved as a signal peptide. The propeptide occupies 20-116 (AQILSMPHAQ…VEPDTIISVH (97 aa)). One can recognise an Inhibitor I9 domain in the interval 34–115 (SYIVMMKDDT…FVEPDTIISV (82 aa)). The region spanning 126–399 (SWGLARISNP…TNVLINNGGA (274 aa)) is the Peptidase S8 domain. Catalysis depends on charge relay system residues Asp158 and His190. The disordered stretch occupies residues 175–198 (GSNQVNDGDDRDGSGHGTHTSGTM). An N-linked (GlcNAc...) asparagine glycan is attached at Asn251. Positions 282–294 (NDNQDAQSSSPAS) are enriched in polar residues. Positions 282–312 (NDNQDAQSSSPASEPSVCTVGSSAEDDSRSS) are disordered. The active-site Charge relay system is Ser345.

The protein belongs to the peptidase S8 family.

It is found in the secreted. In terms of biological role, secreted subtilisin-like serine protease with keratinolytic activity that contributes to pathogenicity. This chain is Subtilisin-like protease 1 (SUB1), found in Arthroderma benhamiae (Trichophyton mentagrophytes).